The sequence spans 188 residues: Photosystem I assembly protein Ycf4 (188 aa).

2 consecutive transmembrane segments (helical) span residues 26–46 (YFWA…GLSS) and 68–88 (LVMG…WFVI).

The protein belongs to the Ycf4 family.

It is found in the cellular thylakoid membrane. Seems to be required for the assembly of the photosystem I complex. The sequence is that of Photosystem I assembly protein Ycf4 from Synechococcus sp. (strain ATCC 27144 / PCC 6301 / SAUG 1402/1) (Anacystis nidulans).